The chain runs to 255 residues: Cyclic di-GMP phosphodiesterase PdeH (255 aa).

The EAL domain occupies 13-255 (EASIESLQER…ETLNTAVLAL (243 aa)).

The catalysed reaction is 3',3'-c-di-GMP + H2O = 5'-phosphoguanylyl(3'-&gt;5')guanosine + H(+). Involved in the control of the switch from cell motility to adhesion via regulation of cellular levels of cyclic-di-GMP (c-di-GMP). Part of a signaling cascade that regulates curli biosynthesis. The cascade is composed of two c-di-GMP control modules, in which c-di-GMP controlled by the DgcE/PdeH pair (module I) regulates the activity of the DgcM/PdeR pair (module II), which in turn regulates activity of the transcription factor MlrA and expression of the master biofilm regulator csgD. Effect on flagella is controlled via the c-di-GMP-binding flagellar brake protein YcgR. This Escherichia coli (strain K12) protein is Cyclic di-GMP phosphodiesterase PdeH.